A 342-amino-acid polypeptide reads, in one-letter code: uncharacterized protein (342 aa).

Belongs to the cycloisomerase 2 family.

This is an uncharacterized protein from Staphylococcus aureus (strain MSSA476).